Here is a 589-residue protein sequence, read N- to C-terminus: Transcription factor 4 (589 aa).

6 disordered regions span residues 1–124 (MTSR…SSSK), 138–163 (DGHHSSDPWSSSSGMNQPGYGGMLGN), 184–239 (PSHS…SQTG), 254–297 (HTNN…EGPL), 384–492 (SLLP…MANN), and 556–589 (KRREEEKVSSEPPPLSLAGPHPGMGDTANHMGQM). Serine 8 and serine 13 each carry phosphoserine. Residues 56–74 (GTLSPTKPGSQYYPYSSNN) are compositionally biased toward polar residues. The interval 136–157 (MQDGHHSSDPWSSSSGMNQPGY) is leucine-zipper. Positions 184–224 (PSHSSADINSSLPPMSTFHRSGTNHYSTSSCTPPANGTDSI) are enriched in polar residues. The segment covering 255–266 (TNNSFSSNPSTP) has biased composition (low complexity). A compositionally biased stretch (polar residues) spans 283–292 (NGGQASSSPN). A Phosphoserine modification is found at serine 290. The segment at 380-403 (RGSHSLLPNQVPVPQLPVQSATSP) is class A specific domain. Low complexity-rich tracts occupy residues 385–398 (LLPNQVPVPQLPVQ) and 421–430 (GQSVSSGSSE). Position 433 is a phosphoserine (serine 433). 2 stretches are compositionally biased toward basic and acidic residues: residues 445-461 (KSSEDKKLDDDKKDIKS) and 477-492 (PEQKAEREKERRMANN). Residues 486–539 (ERRMANNARERLRVRDINEAFKELGRMVQLHLKSDKPQTKLLILHQAVAVILSL) form the bHLH domain.

As to quaternary structure, efficient DNA binding requires dimerization with another bHLH protein. Forms homo- or heterooligomers with myogenin. Interacts with HIVEP2. Interacts with NEUROD2. Interacts with AGBL1.

Its subcellular location is the nucleus. Transcription factor that binds to the immunoglobulin enhancer Mu-E5/KE5-motif. Involved in the initiation of neuronal differentiation. Activates transcription by binding to the E box (5'-CANNTG-3'). Binds to the E-box present in the somatostatin receptor 2 initiator element (SSTR2-INR) to activate transcription. Interacts with the CCAAT displacement protein (CDP2) to bind the tyrosine hydroxylase enhancer. In Rattus norvegicus (Rat), this protein is Transcription factor 4 (Tcf4).